A 462-amino-acid polypeptide reads, in one-letter code: Asparagine--tRNA ligase (462 aa).

This sequence belongs to the class-II aminoacyl-tRNA synthetase family. In terms of assembly, homodimer.

It is found in the cytoplasm. The enzyme catalyses tRNA(Asn) + L-asparagine + ATP = L-asparaginyl-tRNA(Asn) + AMP + diphosphate + H(+). In Thermosynechococcus vestitus (strain NIES-2133 / IAM M-273 / BP-1), this protein is Asparagine--tRNA ligase.